The primary structure comprises 641 residues: Kelch-like protein 22 (641 aa).

The segment at 1–25 (MAEDLETMKPSQAPQQPSLPQGSSK) is disordered. Positions 10–24 (PSQAPQQPSLPQGSS) are enriched in low complexity. Residues 50 to 117 (FDVVLKVEGK…IYTSDLALSV (68 aa)) enclose the BTB domain. Kelch repeat units follow at residues 299-349 (CVVG…VLNN), 350-399 (FVYL…VLGD), 400-446 (FLYA…ALDG), 448-493 (MYVA…ALQE), 494-544 (KIYL…VLAK), and 545-593 (KIFV…VLTL).

Component of the BCR(KLHL22) E3 ubiquitin ligase complex, at least composed of cul3, klhl22 and rbx1.

Its subcellular location is the cytoplasm. The protein localises to the cytosol. The protein resides in the cytoskeleton. It is found in the microtubule organizing center. It localises to the centrosome. Its subcellular location is the spindle. The protein localises to the nucleus. The protein resides in the lysosome. It functions in the pathway protein modification; protein ubiquitination. Functionally, substrate-specific adapter of a BCR (BTB-CUL3-RBX1) E3 ubiquitin ligase complex. The BCR(KLHL22) ubiquitin ligase complex could mediate the monoubiquitination of PLK1 and regulate its activity in spindle assembly checkpoint (SAC) and chromosome segregation. The BCR(KLHL22) ubiquitin ligase complex may also be responsible for the ubiquitin-dependent proteasomal degradation of DEPDC5 and the activation of the TORC1 pathway. The protein is Kelch-like protein 22 (klhl22) of Xenopus tropicalis (Western clawed frog).